Reading from the N-terminus, the 101-residue chain is Urease subunit beta (101 aa).

The protein belongs to the urease beta subunit family. As to quaternary structure, heterotrimer of UreA (gamma), UreB (beta) and UreC (alpha) subunits. Three heterotrimers associate to form the active enzyme.

It is found in the cytoplasm. The catalysed reaction is urea + 2 H2O + H(+) = hydrogencarbonate + 2 NH4(+). It functions in the pathway nitrogen metabolism; urea degradation; CO(2) and NH(3) from urea (urease route): step 1/1. The chain is Urease subunit beta from Burkholderia pseudomallei (strain 668).